The sequence spans 221 residues: uncharacterized protein (221 aa).

Residues 1 to 22 (MGLDNFTAPSTGTTPAGSPFLR) form a disordered region. A compositionally biased stretch (polar residues) spans 7–16 (TAPSTGTTPA).

This sequence belongs to the IIV-6 259R family.

This is an uncharacterized protein from Invertebrate iridescent virus 3 (IIV-3).